Consider the following 143-residue polypeptide: Large ribosomal subunit protein uL15 (143 aa).

Residues 1 to 52 form a disordered region; the sequence is MELNSIQPADGAKHYKRRVGRGIGSGLGKTSGRGHKGQKSRSGGFHKVGFEG. Positions 21–31 are enriched in gly residues; it reads RGIGSGLGKTS.

Belongs to the universal ribosomal protein uL15 family. In terms of assembly, part of the 50S ribosomal subunit.

Binds to the 23S rRNA. The polypeptide is Large ribosomal subunit protein uL15 (Janthinobacterium sp. (strain Marseille) (Minibacterium massiliensis)).